The following is a 203-amino-acid chain: Urease accessory protein UreG (203 aa).

13–20 is a binding site for GTP; it reads GPVGSGKT.

It belongs to the SIMIBI class G3E GTPase family. UreG subfamily. In terms of assembly, homodimer. UreD, UreF and UreG form a complex that acts as a GTP-hydrolysis-dependent molecular chaperone, activating the urease apoprotein by helping to assemble the nickel containing metallocenter of UreC. The UreE protein probably delivers the nickel.

It localises to the cytoplasm. In terms of biological role, facilitates the functional incorporation of the urease nickel metallocenter. This process requires GTP hydrolysis, probably effectuated by UreG. The chain is Urease accessory protein UreG from Methylobacillus flagellatus (strain ATCC 51484 / DSM 6875 / VKM B-1610 / KT).